The primary structure comprises 233 residues: Homeobox protein EMX1 (233 aa).

A DNA-binding region (homeobox) is located at residues P135–K194. The tract at residues R192–D233 is disordered. The span at Q193 to K206 shows a compositional bias: basic and acidic residues.

The protein belongs to the EMX homeobox family.

The protein localises to the nucleus. In terms of biological role, may function in combinations with OTX1/2 to specify cell fates in the developing central nervous system. This Xenopus tropicalis (Western clawed frog) protein is Homeobox protein EMX1 (emx1).